The chain runs to 361 residues: tRNA/tmRNA (uracil-C(5))-methyltransferase (361 aa).

S-adenosyl-L-methionine is bound by residues glutamine 183, tyrosine 211, asparagine 216, glutamate 232, and aspartate 294. Catalysis depends on cysteine 319, which acts as the Nucleophile. Residue glutamate 353 is the Proton acceptor of the active site.

It belongs to the class I-like SAM-binding methyltransferase superfamily. RNA M5U methyltransferase family. TrmA subfamily.

It catalyses the reaction uridine(54) in tRNA + S-adenosyl-L-methionine = 5-methyluridine(54) in tRNA + S-adenosyl-L-homocysteine + H(+). The catalysed reaction is uridine(341) in tmRNA + S-adenosyl-L-methionine = 5-methyluridine(341) in tmRNA + S-adenosyl-L-homocysteine + H(+). Dual-specificity methyltransferase that catalyzes the formation of 5-methyluridine at position 54 (m5U54) in all tRNAs, and that of position 341 (m5U341) in tmRNA (transfer-mRNA). This is tRNA/tmRNA (uracil-C(5))-methyltransferase from Acinetobacter baumannii (strain AB307-0294).